The sequence spans 513 residues: Zinc finger CCCH-type with G patch domain-containing protein (513 aa).

M1 carries the N-acetylmethionine modification. A disordered region spans residues 90–131 (EVPVAPGAELETVPSRETGPGPTERGQEEDDGEDEEGGAALS). A compositionally biased stretch (acidic residues) spans 116 to 126 (QEEDDGEDEEG). A C3H1-type zinc finger spans residues 176 to 202 (KSLKPCSFFLEGKCRFQENCRFSHGQV). A disordered region spans residues 267–296 (LPPLRTEPAGSSDSDGSDADDPSYARVVEP). 2 positions are modified to phosphoserine: S278 and S355. The region spanning 315–361 (TRGIGSRLLAKMGYEFGKGLGRHAEGRVEPVHAVVLPRGKSLDQCAE) is the G-patch domain. Disordered regions lie at residues 367-394 (TRAG…PPPR) and 492-513 (AQEA…MTEF). Residues 497 to 513 (LQREQRKADTHKKMTEF) are compositionally biased toward basic and acidic residues.

As to quaternary structure, interacts with CHD4/Mi-2; the interaction is direct.

It localises to the nucleus. Its function is as follows. Transcription repressor that specifically binds the 5'-GGAG[GA]A[GA]A-3' consensus sequence. Represses transcription by recruiting the chromatin multiprotein complex NuRD to target promoters. Negatively regulates expression of EGFR, a gene involved in cell proliferation, survival and migration. Its ability to repress genes of the EGFR pathway suggest it may act as a tumor suppressor. This is Zinc finger CCCH-type with G patch domain-containing protein (ZGPAT) from Bos taurus (Bovine).